Consider the following 319-residue polypeptide: Tetrahydromethanopterin S-methyltransferase subunit H (319 aa).

The protein belongs to the MtrH family. The complex is composed of 8 subunits; MtrA, MtrB, MtrC, MtrD, MtrE, MtrF, MtrG and MtrH.

It catalyses the reaction 5-methyl-5,6,7,8-tetrahydromethanopterin + coenzyme M + 2 Na(+)(in) = 5,6,7,8-tetrahydromethanopterin + methyl-coenzyme M + 2 Na(+)(out). It participates in one-carbon metabolism; methanogenesis from CO(2); methyl-coenzyme M from 5,10-methylene-5,6,7,8-tetrahydromethanopterin: step 2/2. In terms of biological role, part of a complex that catalyzes the formation of methyl-coenzyme M and tetrahydromethanopterin from coenzyme M and methyl-tetrahydromethanopterin. This is an energy-conserving, sodium-ion translocating step. MtrH catalyzes the transfer of the methyl group from methyl-tetrahydromethanopterin to the corrinoid prosthetic group of MtrA. This is Tetrahydromethanopterin S-methyltransferase subunit H from Methanococcus aeolicus (strain ATCC BAA-1280 / DSM 17508 / OCM 812 / Nankai-3).